We begin with the raw amino-acid sequence, 83 residues long: Mu-theraphotoxin-Hhn2n (83 aa).

A signal peptide spans 1–21 (MKASMYLALAGLVLLFVVGYA). Residues 22 to 48 (SESEEKEFPRELLSKIFAVDDFKGEER) constitute a propeptide that is removed on maturation. Cystine bridges form between Cys50–Cys65, Cys57–Cys70, and Cys64–Cys77. Leu81 bears the Leucine amide mark.

It belongs to the neurotoxin 10 (Hwtx-1) family. 15 (Hntx-3) subfamily. As to quaternary structure, monomer. Expressed by the venom gland.

It localises to the secreted. Its function is as follows. Lethal neurotoxin. Selectively blocks tetrodotoxin-sensitive voltage-gated sodium channels (Nav). Does not affect tetrodotoxin-resistant voltage-gated sodium channels or calcium channels. The protein is Mu-theraphotoxin-Hhn2n of Cyriopagopus hainanus (Chinese bird spider).